Consider the following 387-residue polypeptide: Double C2-like domain-containing protein gamma (387 aa).

C2 domains are found at residues 83–209 (ALGT…DICL) and 243–376 (ERGR…ELWH). The Ca(2+) site is built by D274, D280, D334, D336, and D342.

Ca(2+) serves as cofactor.

Its function is as follows. May be involved in regulation of vesicular trafficking. In vitro, does not bind calcium and phospholipids. This Mus musculus (Mouse) protein is Double C2-like domain-containing protein gamma (Doc2g).